Reading from the N-terminus, the 2073-residue chain is Fatty acid synthase subunit beta (2073 aa).

The acetyltransferase stretch occupies residues 1–459 (MVEAEQVHQS…VYSTDDAGDL (459 aa)). S270 acts as the For acetyltransferase activity in catalysis. An enoyl reductase region spans residues 470–858 (ALAVMITEKV…TRGIMFWKEL (389 aa)). The residue at position 1122 (S1122) is a Phosphoserine. Residues 1155-1644 (GPEYTWFRAI…LPNTELITKL (490 aa)) are dehydratase. H1361 functions as the For dehydratase activity in the catalytic mechanism. Residues 1558 to 1667 (PVFVTPPTNS…VEVLNQETSE (110 aa)) form the MaoC-like domain. A malonyl/palmitoyl transferase region spans residues 1645–2073 (SHTGMINGRK…LQNWDEYESS (429 aa)). The active-site For malonyltransferase activity is S1828. S2073 carries the phosphoserine modification.

Belongs to the fungal fatty acid synthetase subunit beta family. In terms of assembly, [Alpha(6)beta(6)] hexamers of two multifunctional subunits (alpha and beta).

It catalyses the reaction acetyl-CoA + n malonyl-CoA + 2n NADPH + 4n H(+) = a long-chain-acyl-CoA + n CoA + n CO2 + 2n NADP(+).. The enzyme catalyses holo-[ACP] + acetyl-CoA = acetyl-[ACP] + CoA. The catalysed reaction is holo-[ACP] + malonyl-CoA = malonyl-[ACP] + CoA. It carries out the reaction a (3R)-hydroxyacyl-[ACP] = a (2E)-enoyl-[ACP] + H2O. It catalyses the reaction a 2,3-saturated acyl-[ACP] + NAD(+) = a (2E)-enoyl-[ACP] + NADH + H(+). The enzyme catalyses (9Z)-octadecenoyl-[ACP] + H2O = (9Z)-octadecenoate + holo-[ACP] + H(+). Its function is as follows. Fatty acid synthetase catalyzes the formation of long-chain fatty acids from acetyl-CoA, malonyl-CoA and NADPH. The beta subunit contains domains for: [acyl-carrier-protein] acetyltransferase and malonyltransferase, S-acyl fatty acid synthase thioesterase, enoyl-[acyl-carrier-protein] reductase, and 3-hydroxypalmitoyl-[acyl-carrier-protein] dehydratase. The polypeptide is Fatty acid synthase subunit beta (fas1) (Schizosaccharomyces pombe (strain 972 / ATCC 24843) (Fission yeast)).